Consider the following 312-residue polypeptide: Putative endo-1,4-beta-xylanase (312 aa).

Residues 1 to 301 enclose the GH10 domain; the sequence is MKQQYLLDYE…KPCFYSFLQA (301 aa). Glu-104 (proton donor) is an active-site residue. The active-site Nucleophile is the Glu-216.

The protein belongs to the glycosyl hydrolase 10 (cellulase F) family.

It catalyses the reaction Endohydrolysis of (1-&gt;4)-beta-D-xylosidic linkages in xylans.. It functions in the pathway glycan degradation; xylan degradation. Functionally, could be a xylanase. In Caldicellulosiruptor saccharolyticus (Caldocellum saccharolyticum), this protein is Putative endo-1,4-beta-xylanase.